The primary structure comprises 312 residues: GATA zinc finger domain-containing protein 20 (312 aa).

Disordered stretches follow at residues 1–45 and 213–232; these read MGKR…PQQP and TIGS…TNTN. Residues 29 to 45 are compositionally biased toward low complexity; it reads QQQQQQQEQQPQQPQQP. A GATA-type zinc finger spans residues 260-287; that stretch reads CYVCGVTETPYWRRGTDEGVMVDLCNAC.

This Dictyostelium discoideum (Social amoeba) protein is GATA zinc finger domain-containing protein 20 (gtaT).